A 245-amino-acid chain; its full sequence is 1-(5-phosphoribosyl)-5-[(5-phosphoribosylamino)methylideneamino] imidazole-4-carboxamide isomerase (245 aa).

The active-site Proton acceptor is D10. The Proton donor role is filled by D129.

It belongs to the HisA/HisF family.

It localises to the cytoplasm. The enzyme catalyses 1-(5-phospho-beta-D-ribosyl)-5-[(5-phospho-beta-D-ribosylamino)methylideneamino]imidazole-4-carboxamide = 5-[(5-phospho-1-deoxy-D-ribulos-1-ylimino)methylamino]-1-(5-phospho-beta-D-ribosyl)imidazole-4-carboxamide. The protein operates within amino-acid biosynthesis; L-histidine biosynthesis; L-histidine from 5-phospho-alpha-D-ribose 1-diphosphate: step 4/9. This is 1-(5-phosphoribosyl)-5-[(5-phosphoribosylamino)methylideneamino] imidazole-4-carboxamide isomerase from Parafrankia sp. (strain EAN1pec).